The following is a 329-amino-acid chain: MTPYIIETILKVLVVVAIFSALAGFLTYVERKVLAFMQRRLGPMHVGPYGVLQILADGIKLFTKEDIVPVGANQTIFKIAPVISAATAFIAMSAVPFFPEFELFGHTVRPIIADINVGILFVLGVGAVGMYGPLLAGMSSGNKWSLLGAARATVQLLSFEVVSGLSILAPLMMVGSLSLIEINNYQSGGIFDWLVWSQPLAFLLFLIAGYAELNRTPFDLLEHEAEIVAGFATEYSGMRWGMFFIGEYANMITLAFLVVLLFFGGFNPLWFIPGGIAILLKVAVFLFLFLWVRAAWPHIRPDQLMWVCWKVLMPLALLNIVLTGIVLIL.

Helical transmembrane passes span 9–29 (ILKV…LTYV), 79–99 (IAPV…PFFP), 117–137 (VGIL…LLAG), 162–182 (VSGL…LIEI), 188–208 (GGIF…FLIA), 243–263 (FFIG…LLFF), 269–289 (LWFI…LFLF), and 309–329 (WKVL…VLIL).

Belongs to the complex I subunit 1 family. As to quaternary structure, NDH-1 is composed of 14 different subunits. Subunits NuoA, H, J, K, L, M, N constitute the membrane sector of the complex.

The protein resides in the cell inner membrane. The catalysed reaction is a quinone + NADH + 5 H(+)(in) = a quinol + NAD(+) + 4 H(+)(out). NDH-1 shuttles electrons from NADH, via FMN and iron-sulfur (Fe-S) centers, to quinones in the respiratory chain. The immediate electron acceptor for the enzyme in this species is believed to be ubiquinone. Couples the redox reaction to proton translocation (for every two electrons transferred, four hydrogen ions are translocated across the cytoplasmic membrane), and thus conserves the redox energy in a proton gradient. This subunit may bind ubiquinone. The chain is NADH-quinone oxidoreductase subunit H from Wolinella succinogenes (strain ATCC 29543 / DSM 1740 / CCUG 13145 / JCM 31913 / LMG 7466 / NCTC 11488 / FDC 602W) (Vibrio succinogenes).